Here is a 1088-residue protein sequence, read N- to C-terminus: Serine/threonine-protein kinase 11-interacting protein (1088 aa).

LRR repeat units lie at residues 109-130 (SLRH…RGIY), 132-152 (QLET…LSAC), 164-185 (ALLS…LRLL), 187-209 (ALRF…MDLC), 210-231 (ELHH…GPSG), 233-254 (ALGV…EQLR), 255-276 (NLRH…SPLW), and 280-301 (ELRK…RAAT). Disordered stretches follow at residues 335–407 (GLSP…SPAG) and 437–533 (LEPS…QKEV). The segment covering 346 to 367 (PVGSTPETSGGPDLSDSLSSGG) has biased composition (low complexity). The span at 375–385 (HKVKSRVRVRR) shows a compositional bias: basic residues. Serine 387, serine 389, and serine 392 each carry phosphoserine. The span at 447–460 (TPTTSAPSAPPASS) shows a compositional bias: low complexity. Serine 470 is subject to Phosphoserine. Residues 508–529 (EEGEMVEQGEEEAGEEEEEEQD) show a composition bias toward acidic residues. At serine 599 the chain carries Phosphoserine. Disordered stretches follow at residues 724–780 (TPNR…SPPP) and 978–1009 (DAAG…PAVR). Positions 733 to 742 (EQSLAPSPSA) are enriched in polar residues. Residues 750–759 (GHGDHLDRAK) show a composition bias toward basic and acidic residues. Serine 761, serine 773, and serine 777 each carry phosphoserine. A compositionally biased stretch (low complexity) spans 978–994 (DAAGSPAEPSPPAASGE).

This sequence belongs to the STK11IP family. As to quaternary structure, found in a ternary complex composed of STK11/LKB1, STK11IP and SMAD4. Interacts with STK11/LKB1 and SMAD4.

Its subcellular location is the cytoplasm. Functionally, may regulate STK11/LKB1 function by controlling its subcellular localization. This is Serine/threonine-protein kinase 11-interacting protein (STK11IP) from Homo sapiens (Human).